The primary structure comprises 358 residues: 3-isopropylmalate dehydrogenase (358 aa).

77-90 is an NAD(+) binding site; that stretch reads GEKWDSLPRELRPE. Residues arginine 97, arginine 107, arginine 135, and aspartate 220 each contribute to the substrate site. Residues aspartate 220, aspartate 244, and aspartate 248 each coordinate Mg(2+). 277-289 is an NAD(+) binding site; that stretch reads GSAPDIAGQGIAN.

It belongs to the isocitrate and isopropylmalate dehydrogenases family. LeuB type 1 subfamily. As to quaternary structure, homodimer. Mg(2+) serves as cofactor. The cofactor is Mn(2+).

The protein resides in the cytoplasm. The enzyme catalyses (2R,3S)-3-isopropylmalate + NAD(+) = 4-methyl-2-oxopentanoate + CO2 + NADH. It functions in the pathway amino-acid biosynthesis; L-leucine biosynthesis; L-leucine from 3-methyl-2-oxobutanoate: step 3/4. Catalyzes the oxidation of 3-carboxy-2-hydroxy-4-methylpentanoate (3-isopropylmalate) to 3-carboxy-4-methyl-2-oxopentanoate. The product decarboxylates to 4-methyl-2 oxopentanoate. This is 3-isopropylmalate dehydrogenase from Wolinella succinogenes (strain ATCC 29543 / DSM 1740 / CCUG 13145 / JCM 31913 / LMG 7466 / NCTC 11488 / FDC 602W) (Vibrio succinogenes).